A 329-amino-acid chain; its full sequence is Formimidoylglutamase (329 aa).

The Mn(2+) site is built by His-133, Asp-159, His-161, Asp-163, Asp-253, and Asp-255.

This sequence belongs to the arginase family. Mn(2+) serves as cofactor.

The enzyme catalyses N-formimidoyl-L-glutamate + H2O = formamide + L-glutamate. It participates in amino-acid degradation; L-histidine degradation into L-glutamate; L-glutamate from N-formimidoyl-L-glutamate (hydrolase route): step 1/1. Functionally, catalyzes the conversion of N-formimidoyl-L-glutamate to L-glutamate and formamide. In Streptococcus gordonii (strain Challis / ATCC 35105 / BCRC 15272 / CH1 / DL1 / V288), this protein is Formimidoylglutamase.